The chain runs to 75 residues: uncharacterized protein (75 aa).

This is an uncharacterized protein from Bovine papillomavirus type 3.